The chain runs to 516 residues: Amino-acid permease BAT1 (516 aa).

12 helical membrane passes run 33–53 (LSVF…TGIT), 70–90 (YGWF…AEIC), 113–133 (PLAS…VTAS), 164–184 (VVIG…SLPI), 189–209 (FIGQ…MILI), 232–252 (LGIT…QYTI), 275–295 (GIIS…LGIS), 328–348 (FGSG…VFFC), 383–403 (VPIN…LTSL), 406–426 (IVAF…AYAI), 452–472 (VVGW…SLPV), and 483–503 (YTPV…LFSA).

The protein belongs to the amino acid-polyamine-organocation (APC) superfamily. Amino acid/choline transporter (ACT) (TC 2.A.3.4) family. Expressed in roots, rosette leaves, stems, cauline leaves, flowers and siliques.

The protein localises to the mitochondrion membrane. Functionally, may play a role in primary carbon metabolism and plant growth, by mediating the transport of GABA from the cytosol to mitochondria. When expressed in a heterologous system (yeast), imports Arg and Ala across the plasma membrane and exports Lys and Glu, but does not transport proline. The chain is Amino-acid permease BAT1 (BAT1) from Arabidopsis thaliana (Mouse-ear cress).